An 856-amino-acid chain; its full sequence is MEQFDGFEYSKRDLLGHGAFAIVYRGRYVDRTDVPVAIKAIAKKNISKSKNLLTKEIKILKELSSLKHENLVGLLKCTETPTHVYLVMEFCNGGDLADYLQQKTTLNEDTIQHFVVQIAHALEAINKKGIVHRDLKPQNILLCNNSRTQNPHFTDIVIKLADFGFARFLNDGVMAATLCGSPMYMAPEVIMSMQYDAKADLWSIGTILFQCLTGKAPFVAQTPPQLKAYYEKTRELRPNIPEWCSPNLRDLLLRLLKRNAKDRISFEDFFNHPFLTSPLLPSPSKRILESARSPLLANRRIITPQSSLPVPKRAGSTKLDSPTPVRRIGESPRVQRRVITPGMPSPVPGAPMQESTDFTFLPPRQESSPVKQVQVHTNVSPSLTTCKPVPVPSQRLTYQKMEERLAAARKTAVPSSSSPTGSAVSAQHQHQHQQQQEPASSPVVQRIERPDQLPRRTTLQDPNAHDIERMTMPNPTFVVCGSSTKPSPNNANRVRRSTITSPADTQDMVAADQMLSNLDPTTTTTTIPKSATTANIQGIPRGARDRSVTSPPQPTIHENEPLDNAKYQQTDVNNSPTAPTEPFIIKNQTTCSTSSTSSSVVEEEEAMSLPFASGSHLAAGFKKTPAEVPMDHGALPPALDQEIVLGEEHKQILAKLRFVAELVDTLIHVAEQKDNPLASAMASRRQLLTTGTSTTNTSSPYRRAEQLVVYVRALHMLSSALLLAQTNVANRVLHPSVAVQQVLNQLNDKYHQCLVRSQELASLGLPGQDPAMAVISAERIMYRHAIELCQAAALDELFGNPQLCSQRYQTAYMMLHTLAEQVNCDQDKTVLTRYKVAVEKRLRILERQGFVAAVNT.

A Protein kinase domain is found at 9–275 (YSKRDLLGHG…FEDFFNHPFL (267 aa)). ATP contacts are provided by residues 15 to 23 (LGHGAFAIV) and Lys-39. The active-site Proton acceptor is the Asp-134. Residues 304-327 (PQSSLPVPKRAGSTKLDSPTPVRR) are disordered. Residues 358-361 (FTFL) carry the LIR motif. 3 disordered regions span residues 362-391 (PPRQ…PVPV), 405-471 (LAAA…ERMT), and 520-582 (PTTT…PTEP). A compositionally biased stretch (polar residues) spans 365 to 385 (QESSPVKQVQVHTNVSPSLTT). Positions 411–436 (TAVPSSSSPTGSAVSAQHQHQHQQQQ) are enriched in low complexity. Polar residues-rich tracts occupy residues 527–536 (IPKSATTANI) and 566–578 (KYQQ…SPTA). The interval 750–856 (YHQCLVRSQE…RQGFVAAVNT (107 aa)) is required for interaction with unc-14 and vab-8.

The protein belongs to the protein kinase superfamily. Ser/Thr protein kinase family. APG1/unc-51/ULK1 subfamily. In terms of assembly, interacts with unc-14 and vab-8. Interacts (via C-terminus) with atg-13. Interacts (via the LIR motif) with lgg-1; the interaction is direct. It depends on Mg(2+) as a cofactor.

The enzyme catalyses L-seryl-[protein] + ATP = O-phospho-L-seryl-[protein] + ADP + H(+). It catalyses the reaction L-threonyl-[protein] + ATP = O-phospho-L-threonyl-[protein] + ADP + H(+). Functionally, protein kinase important for axonal elongation and axonal guidance. Functions in the CAN axons to direct both anterior and posterior migrations. Phosphorylates both unc-14 and vab-8. Component of the unc-51/atg-13 complex that is probably recruited by lgg-1 to preautophagosomes and is required for autophagosome formation. Interaction with autophagy related proteins such as atg-13 links it to the autophagy machinery to in turn promote P-granule degradation in somatic cells. Plays a role in mitophagy during limited food availability. Regulates cell size. Plays a role in male tail ray pattern formation. May be required for normal dauer morphogenesis. The sequence is that of Serine/threonine-protein kinase unc-51 from Caenorhabditis elegans.